The sequence spans 385 residues: Spermidine/putrescine import ATP-binding protein PotA (385 aa).

Positions isoleucine 6–isoleucine 238 constitute an ABC transporter domain. Residue glycine 40–serine 47 coordinates ATP.

It belongs to the ABC transporter superfamily. Spermidine/putrescine importer (TC 3.A.1.11.1) family. The complex is composed of two ATP-binding proteins (PotA), two transmembrane proteins (PotB and PotC) and a solute-binding protein (PotD).

The protein resides in the cell membrane. The enzyme catalyses ATP + H2O + polyamine-[polyamine-binding protein]Side 1 = ADP + phosphate + polyamineSide 2 + [polyamine-binding protein]Side 1.. Functionally, part of the ABC transporter complex PotABCD involved in spermidine/putrescine import. Responsible for energy coupling to the transport system. The sequence is that of Spermidine/putrescine import ATP-binding protein PotA from Streptococcus pneumoniae serotype 4 (strain ATCC BAA-334 / TIGR4).